The following is a 672-amino-acid chain: Single-strand DNA endonuclease ASTE1 (672 aa).

The segment at 349-398 (TFLHTQVENMQRPNAHRISQPIRQIIYGLLLNGPSHAEDIAQNTLPSQLL) is interaction with SHLD2.

It belongs to the asteroid family. As to quaternary structure, interacts with SHLD1, SHLD2, SHLD3, RIF1 and MAD2L2/REV7.

Its function is as follows. Structure-specific DNA endonuclease that specifically cleaves single-stranded DNA and 3' overhang DNA. Contributes to the control of DNA double-strand break repair choice by antagonizing BRCA1-dependent homologous recombination (HR) and promoting non-homologous end-joining (NHEJ). Recruited to the single-stranded DNA ends by SHLD2 and cleaves the 3' exposed DNA ends, therefore inhibiting DNA end resection (necessary for HR) and promoting DNA end protection (necessary for NHEJ). This is Single-strand DNA endonuclease ASTE1 (Aste1) from Mus musculus (Mouse).